Consider the following 605-residue polypeptide: Alpha-1,3-galactosidase A (605 aa).

Positions 1-20 are cleaved as a signal peptide; that stretch reads MKKYLHILPACFLFYAAAHA. PbH1 repeat units lie at residues 256-278, 312-334, 421-443, 444-466, 477-507, and 517-547; these read SKNI…VSQY, KGKV…NVHG, TPEV…LVTT, PRKV…LIEA, VKDV…HPSN, and HQNI…LFRN.

It belongs to the glycosyl hydrolase 110 family. A subfamily.

The enzyme catalyses Hydrolysis of terminal, non-reducing branched (1-&gt;3)-alpha-D-galactosidic residues, producing free D-galactose.. It catalyses the reaction Hydrolysis of terminal, non-reducing alpha-D-galactose residues in alpha-D-galactosides, including galactose oligosaccharides, galactomannans and galactolipids.. Alpha-galactosidase that specifically removes branched alpha-1,3-linked galactose residues present in blood group B antigens. Has no activity toward linear alpha-1,3-linked galactose residues. The protein is Alpha-1,3-galactosidase A (glaA) of Bacteroides fragilis (strain YCH46).